Reading from the N-terminus, the 307-residue chain is Protoheme IX farnesyltransferase (307 aa).

9 helical membrane passes run 29-49 (VISL…RGWP), 51-71 (LGLL…AGVF), 101-120 (AAIF…WVWA), 124-143 (AAWM…TLWL), 151-171 (IVLG…AVTG), 179-199 (FLFA…ALMI), 218-238 (RLTV…SVMP), 239-259 (VFLG…GWLL), and 280-300 (VAVP…VAGA).

It belongs to the UbiA prenyltransferase family. Protoheme IX farnesyltransferase subfamily.

The protein localises to the cell membrane. The catalysed reaction is heme b + (2E,6E)-farnesyl diphosphate + H2O = Fe(II)-heme o + diphosphate. Its pathway is porphyrin-containing compound metabolism; heme O biosynthesis; heme O from protoheme: step 1/1. Converts heme B (protoheme IX) to heme O by substitution of the vinyl group on carbon 2 of heme B porphyrin ring with a hydroxyethyl farnesyl side group. The protein is Protoheme IX farnesyltransferase of Deinococcus geothermalis (strain DSM 11300 / CIP 105573 / AG-3a).